The primary structure comprises 54 residues: Ribulose bisphosphate carboxylase large chain (54 aa).

The propeptide occupies 1 to 2; it reads MS. Pro-3 carries the post-translational modification N-acetylproline. Lys-14 is subject to N6,N6,N6-trimethyllysine.

Belongs to the RuBisCO large chain family. Type I subfamily. Heterohexadecamer of 8 large chains and 8 small chains.

The protein resides in the plastid. Its subcellular location is the chloroplast. It carries out the reaction 2 (2R)-3-phosphoglycerate + 2 H(+) = D-ribulose 1,5-bisphosphate + CO2 + H2O. It catalyses the reaction D-ribulose 1,5-bisphosphate + O2 = 2-phosphoglycolate + (2R)-3-phosphoglycerate + 2 H(+). In terms of biological role, ruBisCO catalyzes two reactions: the carboxylation of D-ribulose 1,5-bisphosphate, the primary event in carbon dioxide fixation, as well as the oxidative fragmentation of the pentose substrate in the photorespiration process. Both reactions occur simultaneously and in competition at the same active site. In Ilex ciliospinosa (Sichuan holly), this protein is Ribulose bisphosphate carboxylase large chain (rbcL).